The sequence spans 153 residues: MKCPYCGHPDTRVVDSRPSDEGMAIRRRRECPSCGRRFTTYERTQLEPLMVVKRDGRKEPFNPDKLLRGLLLACEKRPVSEEVLRRFAYTFEDQVSGPEITSEEIGLKALAFLKELDHVAYIRFASVYREFDSVERFIEEIRSLASLDKKEGD.

A zinc finger spans residues 3-34; the sequence is CPYCGHPDTRVVDSRPSDEGMAIRRRRECPSC. One can recognise an ATP-cone domain in the interval 49–136; the sequence is LMVVKRDGRK…VYREFDSVER (88 aa).

Belongs to the NrdR family. Zn(2+) is required as a cofactor.

In terms of biological role, negatively regulates transcription of bacterial ribonucleotide reductase nrd genes and operons by binding to NrdR-boxes. This is Transcriptional repressor NrdR from Thermus thermophilus (strain ATCC BAA-163 / DSM 7039 / HB27).